Reading from the N-terminus, the 279-residue chain is Elongation factor Ts (279 aa).

Residues 80–83 (TDFV) are involved in Mg(2+) ion dislocation from EF-Tu.

This sequence belongs to the EF-Ts family.

Its subcellular location is the cytoplasm. In terms of biological role, associates with the EF-Tu.GDP complex and induces the exchange of GDP to GTP. It remains bound to the aminoacyl-tRNA.EF-Tu.GTP complex up to the GTP hydrolysis stage on the ribosome. In Borrelia garinii subsp. bavariensis (strain ATCC BAA-2496 / DSM 23469 / PBi) (Borreliella bavariensis), this protein is Elongation factor Ts.